We begin with the raw amino-acid sequence, 263 residues long: Acyl-[acyl-carrier-protein]--UDP-N-acetylglucosamine O-acyltransferase (263 aa).

Belongs to the transferase hexapeptide repeat family. LpxA subfamily. In terms of assembly, homotrimer.

Its subcellular location is the cytoplasm. The enzyme catalyses a (3R)-hydroxyacyl-[ACP] + UDP-N-acetyl-alpha-D-glucosamine = a UDP-3-O-[(3R)-3-hydroxyacyl]-N-acetyl-alpha-D-glucosamine + holo-[ACP]. The protein operates within glycolipid biosynthesis; lipid IV(A) biosynthesis; lipid IV(A) from (3R)-3-hydroxytetradecanoyl-[acyl-carrier-protein] and UDP-N-acetyl-alpha-D-glucosamine: step 1/6. Involved in the biosynthesis of lipid A, a phosphorylated glycolipid that anchors the lipopolysaccharide to the outer membrane of the cell. The polypeptide is Acyl-[acyl-carrier-protein]--UDP-N-acetylglucosamine O-acyltransferase (Xylella fastidiosa (strain Temecula1 / ATCC 700964)).